A 237-amino-acid chain; its full sequence is Ribonuclease PH (237 aa).

Residues Arg86 and 124-126 (GTR) contribute to the phosphate site.

It belongs to the RNase PH family. In terms of assembly, homohexameric ring arranged as a trimer of dimers.

The catalysed reaction is tRNA(n+1) + phosphate = tRNA(n) + a ribonucleoside 5'-diphosphate. In terms of biological role, phosphorolytic 3'-5' exoribonuclease that plays an important role in tRNA 3'-end maturation. Removes nucleotide residues following the 3'-CCA terminus of tRNAs; can also add nucleotides to the ends of RNA molecules by using nucleoside diphosphates as substrates, but this may not be physiologically important. Probably plays a role in initiation of 16S rRNA degradation (leading to ribosome degradation) during starvation. The polypeptide is Ribonuclease PH (Shewanella sp. (strain W3-18-1)).